Reading from the N-terminus, the 128-residue chain is Large ribosomal subunit protein bL12 (128 aa).

The protein belongs to the bacterial ribosomal protein bL12 family. In terms of assembly, homodimer. Part of the ribosomal stalk of the 50S ribosomal subunit. Forms a multimeric L10(L12)X complex, where L10 forms an elongated spine to which 2 to 4 L12 dimers bind in a sequential fashion. Binds GTP-bound translation factors.

Its function is as follows. Forms part of the ribosomal stalk which helps the ribosome interact with GTP-bound translation factors. Is thus essential for accurate translation. The polypeptide is Large ribosomal subunit protein bL12 (Rubrobacter xylanophilus (strain DSM 9941 / JCM 11954 / NBRC 16129 / PRD-1)).